The primary structure comprises 206 residues: Protein Nef (206 aa).

Gly2 carries N-myristoyl glycine; by host lipidation. Ser6 is modified (phosphoserine; by host). Residues 62–66 (EDGEE) form an acidic; interacts with host PACS1 and PACS2; stabilizes the interaction of NEF/MHC-I with host AP1M1; necessary for MHC-I internalization region. The SH3-binding; interaction with Src family tyrosine kinases stretch occupies residues 70–79 (PVRPQVPLRP). A PxxP; stabilizes the interaction of NEF/MHC-I with host AP1M1; necessary for MHC-I internalization motif is present at residues 73–76 (PQVP). A mediates dimerization, Nef-PTE1 interaction region spans residues 109-125 (DILDLWVYNTQGYFPDW). The segment at 149–181 (VNPQEVEQANEGENNSLLHPMSLHGMEDDGREV) is binding to ATP6V1H. The Dileucine internalization motif; necessary for CD4 internalization signature appears at 165–166 (LL). A Diacidic; necessary for CD4 internalization motif is present at residues 175–176 (ED).

This sequence belongs to the lentivirus primate group Nef protein family. As to quaternary structure, monomer; cytosolic form. Homodimer; membrane bound form. Interacts with Nef associated p21-activated kinase (PAK2); this interaction activates PAK2. Associates with the Nef-MHC-I-AP1 complex; this complex is required for MHC-I internalization. Interacts (via C-terminus) with host PI3-kinase. Interacts with host PACS1; this interaction seems to be weak. Interacts with host PACS2. Interacts with host LCK and MAPK3; these interactions inhibit the kinase activity of the latter. Interacts with host ATP6V1H; this interaction may play a role in CD4 endocytosis. Associates with the CD4-Nef-AP2 complex; this complex is required for CD4 internalization. Interacts with host AP2 subunit alpha and AP2 subunit sigma2. Interacts with TCR-zeta chain; this interaction up-regulates the Fas ligand (FasL) surface expression. Interacts with host HCK, LYN, and SRC; these interactions activate the Src family kinases. Interacts with MAP3K5; this interaction inhibits the Fas and TNFR-mediated death signals. Interacts with beta-COP and PTE1. Interacts with human RACK1; this increases Nef phosphorylation by PKC. Interacts with TP53; this interaction decreases the half-life of TP53, protecting the infected cell against p53-mediated apoptosis. The virion-associated Nef proteins are cleaved by the viral protease to release the soluble C-terminal core protein. Nef is probably cleaved concomitantly with viral structural proteins on maturation of virus particles. Post-translationally, myristoylated. In terms of processing, phosphorylated on serine residues, probably by host PKCdelta and theta.

It localises to the host cell membrane. It is found in the virion. The protein localises to the secreted. Its subcellular location is the host Golgi apparatus membrane. Functionally, factor of infectivity and pathogenicity, required for optimal virus replication. Alters numerous pathways of T-lymphocyte function and down-regulates immunity surface molecules in order to evade host defense and increase viral infectivity. Alters the functionality of other immunity cells, like dendritic cells, monocytes/macrophages and NK cells. Its function is as follows. In infected CD4(+) T-lymphocytes, down-regulates the surface MHC-I, mature MHC-II, CD4, CD28, CCR5 and CXCR4 molecules. Mediates internalization and degradation of host CD4 through the interaction of with the cytoplasmic tail of CD4, the recruitment of AP-2 (clathrin adapter protein complex 2), internalization through clathrin coated pits, and subsequent transport to endosomes and lysosomes for degradation. Diverts host MHC-I molecules to the trans-Golgi network-associated endosomal compartments by an endocytic pathway to finally target them for degradation. MHC-I down-regulation may involve AP-1 (clathrin adapter protein complex 1) or possibly Src family kinase-ZAP70/Syk-PI3K cascade recruited by PACS2. In consequence infected cells are masked for immune recognition by cytotoxic T-lymphocytes. Decreasing the number of immune receptors also prevents reinfection by more HIV particles (superinfection). Down-regulates host SERINC3 and SERINC5 thereby excluding these proteins from the viral particles. Virion infectivity is drastically higher when SERINC3 or SERINC5 are excluded from the viral envelope, because these host antiviral proteins impair the membrane fusion event necessary for subsequent virion penetration. In terms of biological role, bypasses host T-cell signaling by inducing a transcriptional program nearly identical to that of anti-CD3 cell activation. Interaction with TCR-zeta chain up-regulates the Fas ligand (FasL). Increasing surface FasL molecules and decreasing surface MHC-I molecules on infected CD4(+) cells send attacking cytotoxic CD8+ T-lymphocytes into apoptosis. Plays a role in optimizing the host cell environment for viral replication without causing cell death by apoptosis. Protects the infected cells from apoptosis in order to keep them alive until the next virus generation is ready to strike. Inhibits the Fas and TNFR-mediated death signals by blocking MAP3K5/ASK1. Decreases the half-life of TP53, protecting the infected cell against p53-mediated apoptosis. Inhibits the apoptotic signals regulated by the Bcl-2 family proteins through the formation of a Nef/PI3-kinase/PAK2 complex that leads to activation of PAK2 and induces phosphorylation of host BAD. Functionally, extracellular Nef protein targets CD4(+) T-lymphocytes for apoptosis by interacting with CXCR4 surface receptors. The polypeptide is Protein Nef (Homo sapiens (Human)).